The following is a 531-amino-acid chain: Apolipoprotein N-acyltransferase (531 aa).

7 helical membrane-spanning segments follow: residues Ile-8–Val-28, Phe-34–Val-54, Pro-69–Gly-89, Leu-105–Ala-125, Ile-136–Gly-156, Val-178–Ile-198, and Gly-207–Ala-227. One can recognise a CN hydrolase domain in the interval Val-243 to Gly-493. Catalysis depends on Glu-287, which acts as the Proton acceptor. Residue Lys-351 is part of the active site. Cys-405 functions as the Nucleophile in the catalytic mechanism. Residues Ile-507–Asn-527 form a helical membrane-spanning segment.

The protein belongs to the CN hydrolase family. Apolipoprotein N-acyltransferase subfamily.

The protein resides in the cell inner membrane. It catalyses the reaction N-terminal S-1,2-diacyl-sn-glyceryl-L-cysteinyl-[lipoprotein] + a glycerophospholipid = N-acyl-S-1,2-diacyl-sn-glyceryl-L-cysteinyl-[lipoprotein] + a 2-acyl-sn-glycero-3-phospholipid + H(+). The protein operates within protein modification; lipoprotein biosynthesis (N-acyl transfer). Functionally, catalyzes the phospholipid dependent N-acylation of the N-terminal cysteine of apolipoprotein, the last step in lipoprotein maturation. The sequence is that of Apolipoprotein N-acyltransferase from Sinorhizobium medicae (strain WSM419) (Ensifer medicae).